The chain runs to 711 residues: Ribosomal RNA large subunit methyltransferase K/L (711 aa).

The THUMP domain maps to 43 to 154 (LGYRITLWSR…RGEITIGINF (112 aa)).

This sequence belongs to the methyltransferase superfamily. RlmKL family.

Its subcellular location is the cytoplasm. The catalysed reaction is guanosine(2445) in 23S rRNA + S-adenosyl-L-methionine = N(2)-methylguanosine(2445) in 23S rRNA + S-adenosyl-L-homocysteine + H(+). It catalyses the reaction guanosine(2069) in 23S rRNA + S-adenosyl-L-methionine = N(2)-methylguanosine(2069) in 23S rRNA + S-adenosyl-L-homocysteine + H(+). Specifically methylates the guanine in position 2445 (m2G2445) and the guanine in position 2069 (m7G2069) of 23S rRNA. In Shewanella pealeana (strain ATCC 700345 / ANG-SQ1), this protein is Ribosomal RNA large subunit methyltransferase K/L.